The sequence spans 419 residues: Probable sodium/metabolite cotransporter BASS2, chloroplastic (419 aa).

A chloroplast-targeting transit peptide spans Met-1 to Val-45. The next 9 membrane-spanning stretches (helical) occupy residues Ile-106–Ile-126, Thr-137–Phe-157, Val-170–Met-190, Leu-194–Ser-214, Val-225–Leu-245, Ala-259–Leu-279, Ile-291–Ile-311, Gly-323–Leu-343, and Val-384–Trp-404.

Belongs to the bile acid:sodium symporter (BASS) (TC 2.A.28) family.

Its subcellular location is the membrane. It localises to the plastid. It is found in the chloroplast envelope. Functionally, may function as sodium-coupled metabolite transporter across the chloroplast envelope. This Oryza sativa subsp. japonica (Rice) protein is Probable sodium/metabolite cotransporter BASS2, chloroplastic (BASS2).